A 63-amino-acid polypeptide reads, in one-letter code: UPF0391 membrane protein lpg2415 (63 aa).

Transmembrane regions (helical) follow at residues 4–24 (WALI…RGVA) and 33–53 (VLFF…LLGG).

The protein belongs to the UPF0391 family.

It is found in the cell membrane. This Legionella pneumophila subsp. pneumophila (strain Philadelphia 1 / ATCC 33152 / DSM 7513) protein is UPF0391 membrane protein lpg2415.